Here is a 171-residue protein sequence, read N- to C-terminus: Tubulin polymerization-promoting protein family member 2 (171 aa).

A disordered region spans residues 120-171 (LTDTSKYTGTHKERFDESGKGKGIAGREDVTDNSGYVSGYKGAGTYDKKGSN). Residues 129 to 149 (THKERFDESGKGKGIAGREDV) are compositionally biased toward basic and acidic residues.

This sequence belongs to the TPPP family.

Its subcellular location is the cytoplasm. It localises to the cytosol. The protein localises to the cell projection. The protein resides in the cilium. It is found in the flagellum. Probable regulator of microtubule dynamics required for sperm motility. In contrast to other members of the family, has no microtubule bundling activity. The protein is Tubulin polymerization-promoting protein family member 2 of Bos taurus (Bovine).